The following is a 182-amino-acid chain: Adenine phosphoribosyltransferase (182 aa).

An AMP-binding site is contributed by 133–137 (ATGGS).

This sequence belongs to the purine/pyrimidine phosphoribosyltransferase family. In terms of assembly, homodimer. Requires Mg(2+) as cofactor.

The protein localises to the cytoplasm. It localises to the nucleus. The catalysed reaction is AMP + diphosphate = 5-phospho-alpha-D-ribose 1-diphosphate + adenine. It participates in purine metabolism; AMP biosynthesis via salvage pathway; AMP from adenine: step 1/1. In terms of biological role, catalyzes a salvage reaction resulting in the formation of AMP, that is energically less costly than de novo synthesis. The sequence is that of Adenine phosphoribosyltransferase (APT1) from Yarrowia lipolytica (strain CLIB 122 / E 150) (Yeast).